A 1094-amino-acid chain; its full sequence is RecBCD enzyme subunit RecB (1094 aa).

The 326-residue stretch at 1-326 folds into the UvrD-like helicase ATP-binding domain; the sequence is MDRFELLGPL…YTLGVNWRSD (326 aa). Positions 1 to 713 are DNA-binding and helicase activity, interacts with RecC; sequence MDRFELLGPL…LLRGRRPGQS (713 aa). 21–28 contacts ATP; that stretch reads ASAGTGKT. The 257-residue stretch at 357–613 folds into the UvrD-like helicase C-terminal domain; sequence AGHRLASAPR…QIMTVFVAKG (257 aa). Residues 775-1094 are nuclease activity, interacts with RecD and RecA; that stretch reads TWRRTSYSDL…DLLDRGRLQS (320 aa). Mg(2+)-binding residues include His-838, Asp-975, and Asp-989. Asp-989 acts as the For nuclease activity in catalysis.

It belongs to the helicase family. UvrD subfamily. As to quaternary structure, heterotrimer of RecB, RecC and RecD. All subunits contribute to DNA-binding. Interacts with RecA. It depends on Mg(2+) as a cofactor.

The catalysed reaction is Exonucleolytic cleavage (in the presence of ATP) in either 5'- to 3'- or 3'- to 5'-direction to yield 5'-phosphooligonucleotides.. The enzyme catalyses Couples ATP hydrolysis with the unwinding of duplex DNA by translocating in the 3'-5' direction.. It catalyses the reaction ATP + H2O = ADP + phosphate + H(+). Functionally, a helicase/nuclease that prepares dsDNA breaks (DSB) for recombinational DNA repair. Binds to DSBs and unwinds DNA via a highly rapid and processive ATP-dependent bidirectional helicase activity. In the holoenzyme this subunit contributes ATPase, 3'-5' helicase, exonuclease activity and loads RecA onto ssDNA. Unlike the case in E.coli, suppresses RecA-dependent homologous recombination, is instead required for single-strand annealing pathway repair of DSB. The chain is RecBCD enzyme subunit RecB from Mycobacterium tuberculosis (strain CDC 1551 / Oshkosh).